A 293-amino-acid chain; its full sequence is MEITFQKVEHRYQYKTPFERRALYDVDVSFPSGGYYAIIGHTGSGKSTMIQHLNGLLQPTNGTVQIGEHFISAGKKEKKLKPLRKKVGVVFQFPEHQLFEETVEKDICFGPTNFGVSEEAAKQKAREAIELVGLEPELLARSPFELSGGQMRRVAIAGVLAMEPEVLVLDEPTAGLDPKGQNELMEMFYKLHKEKGLTVILVTHNMEDAAKYAEQIVVMHKGTVFLQGSAEEVFSHADELEKIGVDLPMSLKYKRAIEEKFGISIPKATLSLEDLTHEVVQVLRKGGHESCSS.

The ABC transporter domain occupies 3 to 246 (ITFQKVEHRY…ADELEKIGVD (244 aa)). Residue 40-47 (GHTGSGKS) coordinates ATP.

The protein belongs to the ABC transporter superfamily. Energy-coupling factor EcfA family. In terms of assembly, forms a stable energy-coupling factor (ECF) transporter complex composed of 2 membrane-embedded substrate-binding proteins (S component), 2 ATP-binding proteins (A component) and 2 transmembrane proteins (T component).

It is found in the cell membrane. ATP-binding (A) component of a common energy-coupling factor (ECF) ABC-transporter complex. Unlike classic ABC transporters this ECF transporter provides the energy necessary to transport a number of different substrates. The polypeptide is Energy-coupling factor transporter ATP-binding protein EcfA2 (Bacillus anthracis).